The primary structure comprises 329 residues: MSHSYNVRPLVSGAPHVSLVTASTSDASIDEFFSHHPIDEILSEKGALLFRGFSINEDQQFSQLVSILAKEELTYQERSTQRKKTAQGVYTSTEYPAAKTIANHSENAFQQVVPGKILFYAHQAALKGGETPIADNSRVLSLIDEEIVAEFRQKGIRYLRNFDGGFDLSWQEAFQTEKKREVETYCVKNAIDCEWLSDSHLRTSQLRSATRRHPLNRKEMWFNQLHLFHITNLELPVRQALLASLGHDLLPRHAVYGTGEEIPDEVVDHIRAALVKAELVFPWQTGDVLIADNILVSHGRKPFEGERAVRVALIDPVYPSAEENPHAQR.

Fe(2+) is required as a cofactor.

It functions in the pathway antibiotic biosynthesis. Its function is as follows. Involved in dapdiamide antibiotics biosynthesis. Catalyzes the alpha-ketoglutarate-dependent epoxidation of the covalently bound N-beta-fumaramoyl-DAP-S-DdaD to generate N-beta-epoxysuccinamoyl-DAP in thioester linkage to DdaD. This is Dapdiamide synthesis protein DdaC from Enterobacter agglomerans (Erwinia herbicola).